The primary structure comprises 431 residues: BEL1-like homeodomain protein 5 (431 aa).

Residues 80 to 96 (PIYLKAAQELLNEIVNV) are SR/KY domain. The segment at 128–199 (GVAALQMKKA…AVKDMISLQI (72 aa)) is BELL domain. Positions 228-290 (AWRPQRGLPE…NARVRMWKPL (63 aa)) form a DNA-binding region, homeobox. Positions 302 to 312 (EESRKGSDRYS) are enriched in basic and acidic residues. Positions 302–333 (EESRKGSDRYSTKGSSSKQPYNNTTSNESSNT) are disordered. The span at 313 to 322 (TKGSSSKQPY) shows a compositional bias: polar residues. A compositionally biased stretch (low complexity) spans 323–333 (NNTTSNESSNT).

This sequence belongs to the TALE/BELL homeobox family. In terms of assembly, may form heterodimeric complexes with TALE/KNOX proteins. Interacts with OFP1.

It localises to the nucleus. This Arabidopsis thaliana (Mouse-ear cress) protein is BEL1-like homeodomain protein 5 (BLH5).